Here is an 805-residue protein sequence, read N- to C-terminus: Angiotensin-converting enzyme 2 (805 aa).

A signal peptide spans 1 to 17; the sequence is MSSSSWLLLSLVAVTAA. The Extracellular segment spans residues 18–740; sequence QSTIEEQAKT…LGPPNQPPVS (723 aa). The Peptidase M2 domain maps to 19-607; sequence STIEEQAKTF…QNKNSFVGWS (589 aa). Positions 30–41 are interaction with SARS-CoV spike glycoprotein; the sequence is DKFNHEAEDLFY. Asn53 carries an N-linked (GlcNAc...) asparagine glycan. The interval 82-84 is interaction with SARS-CoV spike glycoprotein; sequence MYP. 2 N-linked (GlcNAc...) asparagine glycosylation sites follow: Asn90 and Asn103. An intrachain disulfide couples Cys133 to Cys141. Residue Arg169 participates in chloride binding. Substrate is bound at residue Arg273. N-linked (GlcNAc...) asparagine glycosylation is present at Asn322. An intrachain disulfide couples Cys344 to Cys361. 345–346 contributes to the substrate binding site; that stretch reads HP. Positions 353–357 are interaction with SARS-CoV spike glycoprotein; that stretch reads KGDFR. Position 374 (His374) interacts with Zn(2+). Catalysis depends on Glu375, which acts as the Proton acceptor. Zn(2+)-binding residues include His378 and Glu402. N-linked (GlcNAc...) asparagine glycosylation is present at Asn432. Chloride contacts are provided by Trp477 and Lys481. His505 (proton donor) is an active-site residue. Tyr515 is a substrate binding site. An intrachain disulfide couples Cys530 to Cys542. N-linked (GlcNAc...) asparagine glycosylation occurs at Asn546. In terms of domain architecture, Collectrin-like spans 614–805; it reads ADQSIKVRIS…QNTDDVQTSF (192 aa). The interval 652 to 659 is essential for cleavage by ADAM17; sequence RQYFLKVK. A glycan (N-linked (GlcNAc...) asparagine) is linked at Asn690. An essential for cleavage by TMPRSS11D and TMPRSS2 region spans residues 697 to 716; that stretch reads RTEVEKAIRMSRSRINDAFR. Residues 741 to 761 form a helical membrane-spanning segment; sequence IWLIVFGVVMGVIVVGIVILI. Residues 762 to 805 are Cytoplasmic-facing; that stretch reads FTGIRDRKKKNKARSGENPYASIDISKGENNPGFQNTDDVQTSF. The segment at 772-805 is disordered; the sequence is NKARSGENPYASIDISKGENNPGFQNTDDVQTSF. Positions 778–786 match the LIR motif; sequence ENPYASIDI. Tyr781 carries the phosphotyrosine modification. Positions 781-784 match the Endocytic sorting signal motif; it reads YASI. Residues 781-785 carry the SH2-binding motif; it reads YASID. The residue at position 783 (Ser783) is a Phosphoserine. A Glycyl lysine isopeptide (Lys-Gly) (interchain with G-Cter in ubiquitin) cross-link involves residue Lys788. The segment covering 789–805 has biased composition (polar residues); that stretch reads GENNPGFQNTDDVQTSF. The PTB motif lies at 792-795; the sequence is NPGF. The PDZ-binding motif lies at 803-805; the sequence is TSF.

It belongs to the peptidase M2 family. In terms of assembly, homodimer. Interacts with the catalytically active form of TMPRSS2. Interacts with SLC6A19; this interaction is essential for expression and function of SLC6A19 in intestine. Interacts with ITGA5:ITGB1. Probably interacts (via endocytic sorting signal motif) with AP2M1; the interaction is inhibited by phosphorylation of Tyr-781. Interacts (via PDZ-binding motif) with NHERF1 (via PDZ domains); the interaction may enhance ACE2 membrane residence. (Microbial infection) Interacts with SARS coronavirus/SARS-CoV spike protein. As to quaternary structure, (Microbial infection) Interacts with SARS coronavirus-2/SARS-CoV-2 spike protein (via RBD domain). In terms of assembly, (Microbial infection) Interacts with human coronavirus NL63 spike protein. (Microbial infection) Interacts with human coronavirus NL63/HCoV-NL63 spike glycoprotein. As to quaternary structure, (Microbial infection) Interacts with SARS coronavirus-2/SARS-CoV-2 spike protein; the interaction is increased by AVP/Arg-vasopressin with which they may form a complex. Requires Zn(2+) as cofactor. Chloride is required as a cofactor. In terms of processing, N-glycosylation on Asn-90 may limit SARS infectivity. Proteolytic cleavage by ADAM17 generates a secreted form. Also cleaved by serine proteases: TMPRSS2, TMPRSS11D and HPN/TMPRSS1. Post-translationally, phosphorylated. Phosphorylation at Tyr-781 probably inhibits interaction with AP2M1 and enables interactions with proteins containing SH2 domains. In terms of processing, ubiquitinated. Ubiquitinated on Lys-788 via 'Lys-48'-linked ubiquitin. 'Lys-48'-linked deubiquitinated by USP50 on the Lys-788; leading to its stabilization. As to expression, expressed in endothelial cells from small and large arteries, and in arterial smooth muscle cells (at protein level). Expressed in enterocytes of the small intestine, Leydig cells and Sertoli cells (at protein level). Expressed in the renal proximal tubule and the small intestine (at protein level). Expressed in heart, kidney, testis, and gastrointestinal system (at protein level). In lung, expressed at low levels in some alveolar type 2 cells, the expression seems to be individual-specific (at protein level). Expressed in nasal epithelial cells (at protein level). Coexpressed with TMPRSS2 within some lung alveolar type 2 cells, ileal absorptive enterocytes, intestinal epithelial cells, cornea, gallbladder and nasal goblet secretory cells. Coexpressed with TMPRSS4 within mature enterocytes. Expressed in nasal and bronchial epithelial cells (at protein level).

It is found in the secreted. The protein resides in the cell membrane. The protein localises to the cytoplasm. Its subcellular location is the cell projection. It localises to the cilium. It is found in the apical cell membrane. The enzyme catalyses angiotensin II + H2O = angiotensin-(1-7) + L-phenylalanine. It carries out the reaction angiotensin I + H2O = angiotensin-(1-9) + L-leucine. The catalysed reaction is bradykinin(1-8) + H2O = bradykinin(1-7) + L-phenylalanine. It catalyses the reaction neurotensin + H2O = neurotensin-(1-12) + L-leucine. The enzyme catalyses neurotensin-(1-8) + H2O = neurotensin-(1-7) + L-arginine. It carries out the reaction kinetensin + H2O = kinetensin-(1-8) + L-leucine. The catalysed reaction is dynorphin A-(1-13) + H2O = dynorphin A-(1-12) + L-lysine. It catalyses the reaction apelin-13 + H2O = apelin-12 + L-phenylalanine. The enzyme catalyses [Pyr1]apelin-13 + H2O = [Pyr1]apelin-12 + L-phenylalanine. It carries out the reaction apelin-17 + H2O = apelin-16 + L-phenylalanine. The catalysed reaction is beta-casomorphin-7 + H2O = beta-casomorphin-6 + L-isoleucine. It catalyses the reaction neocasomorphin + H2O = neocasomorphin-(1-5) + L-isoleucine. Regulated by chloride and fluoride, but not bromide. Chloride increases angiotensin I and decreases angiotensin II cleavage. Inhibited by MLN-4760, cFP_Leu, and EDTA, but not by the ACE inhibitors lisinopril, captopril and enalaprilat. Highly potent and selective in vitro ACE2 inhibitors were identified. Essential counter-regulatory carboxypeptidase of the renin-angiotensin hormone system that is a critical regulator of blood volume, systemic vascular resistance, and thus cardiovascular homeostasis. Converts angiotensin I to angiotensin 1-9, a nine-amino acid peptide with anti-hypertrophic effects in cardiomyocytes, and angiotensin II to angiotensin 1-7, which then acts as a beneficial vasodilator and anti-proliferation agent, counterbalancing the actions of the vasoconstrictor angiotensin II. Also removes the C-terminal residue from three other vasoactive peptides, neurotensin, kinetensin, and des-Arg bradykinin, but is not active on bradykinin. Also cleaves other biological peptides, such as apelins (apelin-13, [Pyr1]apelin-13, apelin-17, apelin-36), casomorphins (beta-casomorphin-7, neocasomorphin) and dynorphin A with high efficiency. In addition, ACE2 C-terminus is homologous to collectrin and is responsible for the trafficking of the neutral amino acid transporter SL6A19 to the plasma membrane of gut epithelial cells via direct interaction, regulating its expression on the cell surface and its catalytic activity. In terms of biological role, (Microbial infection) Acts as a receptor for human coronaviruses SARS-CoV and SARS-CoV-2, as well as human coronavirus NL63/HCoV-NL63. Functionally, non-functional as a carboxypeptidase. Its function is as follows. (Microbial infection) Non-functional as a receptor for human coronavirus SARS-CoV-2. The polypeptide is Angiotensin-converting enzyme 2 (Homo sapiens (Human)).